Here is a 60-residue protein sequence, read N- to C-terminus: UPF0434 protein Dtpsy_1553 (60 aa).

The protein belongs to the UPF0434 family.

The sequence is that of UPF0434 protein Dtpsy_1553 from Acidovorax ebreus (strain TPSY) (Diaphorobacter sp. (strain TPSY)).